The following is a 116-amino-acid chain: NADH-ubiquinone oxidoreductase chain 3 (116 aa).

Transmembrane regions (helical) follow at residues 6–26 (FMLLLSLTLSIILTTINFWLA), 56–76 (FFLVAILFLLFDLEIALLLPL), and 85–105 (PLLTLLWTSILLLLLTLGLVY).

Belongs to the complex I subunit 3 family.

It localises to the mitochondrion membrane. It carries out the reaction a ubiquinone + NADH + 5 H(+)(in) = a ubiquinol + NAD(+) + 4 H(+)(out). Core subunit of the mitochondrial membrane respiratory chain NADH dehydrogenase (Complex I) that is believed to belong to the minimal assembly required for catalysis. Complex I functions in the transfer of electrons from NADH to the respiratory chain. The immediate electron acceptor for the enzyme is believed to be ubiquinone. The protein is NADH-ubiquinone oxidoreductase chain 3 (MT-ND3) of Struthio camelus (Common ostrich).